The chain runs to 131 residues: Agouti-signaling protein (131 aa).

An N-terminal signal peptide occupies residues 1-22 (MDVTRLLLATLVGFLCFLTVHS). An N-linked (GlcNAc...) asparagine glycan is attached at Asn39. Residues 58-96 (KSKKISRKEAEKRKRSSKKKASIKKVARPPPPSPCVATR) form a disordered region. Residues 70–84 (RKRSSKKKASIKKVA) show a composition bias toward basic residues. 5 disulfides stabilise this stretch: Cys92-Cys107, Cys99-Cys113, Cys106-Cys124, Cys110-Cys131, and Cys115-Cys122. Residues 92–131 (CVATRDSCKPPAPACCNPCASCQCRFFGSACTCRVLNPNC) form the Agouti domain.

The protein localises to the secreted. In terms of biological role, involved in the regulation of melanogenesis. The binding of ASP to MC1R precludes alpha-MSH initiated signaling and thus blocks production of cAMP, leading to a down-regulation of eumelanogenesis (brown/black pigment) and thus increasing synthesis of pheomelanin (yellow/red pigment). The protein is Agouti-signaling protein of Rattus norvegicus (Rat).